We begin with the raw amino-acid sequence, 432 residues long: MQGNLEVLEGLARRLDISVPVDQLETEVQSRLKRLARSVKMHGFRPGKAPLSAVARQHGAGVRQEVLGETLKTRFGEAVQTHQLRIAGYPRFEPKADASAAAEMTFSASFEVYPEVKIDALDSATLNRPVVELGDADVAKTLEVLQKQRRTFATAARAAAEGDLVKFDYQGTVDGAPFEGGRGEDFAAVIGEGRLLKDFEQALVGLKAGDSKGFDLTFPAEYAARELADKTAHFEVQVKEVQAPVLPPVDAEFAEALGVEDGDVEKLKAEVKSNLEREVKRRVQAKLKEQAMELLLQKSTLDLPRSLVEMEMDRLRRMTEADMQSRGVQSMKLSADMFTGQAERRVRLGLILAEIVQANKLAAQPEQIRSLIQDQAQSYEEPDQVVQWYYQSPERMQEIESLALEENVVAWVADQATVVDVATSFDELMGRA.

The region spanning 162-247 (GDLVKFDYQG…VKEVQAPVLP (86 aa)) is the PPIase FKBP-type domain.

The protein belongs to the FKBP-type PPIase family. Tig subfamily.

The protein localises to the cytoplasm. The catalysed reaction is [protein]-peptidylproline (omega=180) = [protein]-peptidylproline (omega=0). Its function is as follows. Involved in protein export. Acts as a chaperone by maintaining the newly synthesized protein in an open conformation. Functions as a peptidyl-prolyl cis-trans isomerase. The protein is Trigger factor of Thiobacillus denitrificans (strain ATCC 25259 / T1).